Reading from the N-terminus, the 623-residue chain is MPHSDELDSRDVLSVSGLNIAFHHEGQQVDAVRNVSLRLKRGETLTIVGESGSGKSVTALALMRLIEQSGANVRCGEMLLRRRNRQVIELSEQSDAQMRRVRGADIAMIFQEPMTSLNPVFTVGEQIAESIRLHQGASHEEALAEAKRMLDQVRIPESQAILSRYPHQLSGGMRQRVMIAMALSCRPAVLIADEPTTALDVTIQAQILQLIKVLQQEMSMGVIFITHDMGVVADIADRVLVMYQGEAVETGSVEQIFHAPTHPYTQTLLAAVPQLGAMRGHSLPRRFPLISADEPALYESQIEQDTVVEGEPILQVRGLVTRFPLRSGLFNRVTREVHAVENISFDLWPGETLSLVGESGSGKSTTGRALLRLVESRQGEIIFNGQRIDTLSAGKLQPLRRDIQCIFQDPYASLDPRQTVGYSIMEPLRIHGLGQGDAAAKRVAWLLERVGLRPEHAWRYPHEFSGGQRQRICIARALALNPKVIIADEAVSALDVSVRGQIINLLLDLQREMGIAYLFISHDMAVVERISHRVAVMYLGQIVEMGPRRAVFENPQHPYTRKLMAAVPVADPSRHRPRRVLLSDDIPSNIHKRGEETPAVSLQLVGPGHYVARPLQDNALSRL.

2 ABC transporter domains span residues 15–269 and 325–564; these read VSGL…QTLL and LRSG…RKLM. Residues 49 to 56 and 357 to 364 each bind ATP; these read GESGSGKS.

The protein belongs to the ABC transporter superfamily. Glutathione importer (TC 3.A.1.5.11) family. The complex is composed of two ATP-binding proteins (GsiA), two transmembrane proteins (GsiC and GsiD) and a solute-binding protein (GsiB).

It is found in the cell inner membrane. The catalysed reaction is glutathione(out) + ATP + H2O = glutathione(in) + ADP + phosphate + H(+). Its function is as follows. Part of the ABC transporter complex GsiABCD involved in glutathione import. Responsible for energy coupling to the transport system. This chain is Glutathione import ATP-binding protein GsiA, found in Salmonella typhi.